A 561-amino-acid chain; its full sequence is MAHYELHVLFVHSWMLALILITTLVWLAASQKAFTPDLVFPEMNRNSSWSVANYGEILCPTSFQSYDPKKHQILTRVLVERPSLNTDTKVEGYTCHKVKYETICDMPWYFSPTISHSISPLRVKESECKDAIAEHQLGTHVPLSFPPEDCSWNSVNTKEYEDIIVKEHPVMLDPYTNNYVDAIFPGGISSPGMGGTIHDDMMWVSKDLAVSPECSGWQRSMGLIYSSRLYGEREPMLEVGSIHIEGHRDKNLTLACRISFCGEIGVRFHDGEWMKVSVNLDHPNSVTFQVTDFPPCPPGTTIQTAVVENINPEIQELTVNMMYRLKCQETISKMVSGLPTSALDLSYLIQVQEGPGIVYKREKGILYQSVGMYQYIDTVTLNKEENQLGENSRGQKVFWTEWSDSPTRPGLQEGINGIVKYEGQVRVPLGMSLRLEAATELMWGHPVHTVSHPILHVISNHTEQSVTTWNRGVNSTNLIGLATRSISGFYDNLKLYLILALIFVSLIALVVLDVIPFKYILFVLCPPLLLCRFIKCSRRKPETRDRYHVEYNRPGQVSSAF.

The first 30 residues, 1 to 30 (MAHYELHVLFVHSWMLALILITTLVWLAAS), serve as a signal peptide directing secretion. Topologically, residues 31–495 (QKAFTPDLVF…ISGFYDNLKL (465 aa)) are virion surface. 5 disulfides stabilise this stretch: C59/C327, C95/C128, C104/C150, C214/C261, and C256/C296. A helical membrane pass occupies residues 496 to 530 (YLILALIFVSLIALVVLDVIPFKYILFVLCPPLLL). At 531 to 561 (CRFIKCSRRKPETRDRYHVEYNRPGQVSSAF) the chain is on the intravirion side.

This sequence belongs to the vesiculovirus glycoprotein family. In terms of assembly, homotrimer. Glycosylated by host.

The protein resides in the virion membrane. Its subcellular location is the host membrane. Attaches the virus to host receptors, inducing clathrin-dependent endocytosis of the virion. In terms of biological role, in the endosome, the acidic pH induces conformational changes in the glycoprotein trimer, which trigger fusion between virus and endosomal membrane. The protein is Glycoprotein (G) of Drosophila melanogaster sigma virus (isolate Drosophila/USA/AP30/2005) (DMelSV).